The chain runs to 793 residues: Ankyrin repeat domain-containing protein SOWAHB (793 aa).

Disordered regions lie at residues 83–185 (EEGL…QARA), 219–290 (ATAE…ELLT), 337–360 (QLPL…SSHS), and 396–543 (DFVD…SPRV). 3 stretches are compositionally biased toward low complexity: residues 96–108 (APSA…CSPR), 134–144 (AGAAARAADAA), and 175–185 (AAAAAGAQARA). Ser106 is modified (phosphoserine). Over residues 220-244 (TAEEKPARALPAQDDRGASREREEG) the composition is skewed to basic and acidic residues. Over residues 246-273 (LAEPAPVPAVAHSPPATVEAATSRASPP) the composition is skewed to low complexity. Phosphoserine is present on Ser271. The span at 396–406 (DFVDQESDGSE) shows a compositional bias: acidic residues. 2 stretches are compositionally biased toward low complexity: residues 407-417 (ESSSGPKDSPG) and 498-508 (RSSLAGRAKLS). The segment covering 521–533 (KRSRRPPRSRKPS) has biased composition (basic residues). ANK repeat units follow at residues 630-659 (TGYT…KAGI) and 669-699 (CGYT…RVNV). Ser761 carries the post-translational modification Phosphoserine.

Belongs to the SOWAH family.

This chain is Ankyrin repeat domain-containing protein SOWAHB (SOWAHB), found in Homo sapiens (Human).